Reading from the N-terminus, the 154-residue chain is MPLKPLALSLQWGRFDAAAAQRSALPRHLIRRWIRHALTTDAEITVRIVGADEGRQLNRTYRNKDYATNVLTFVYSQAPLVTADLLLCAPVIEREAQQQGKHLQAHYAHMLVHGTLHAQGWDHEGSADADAMQARETQIMQALGFADPYARQPG.

Residues His113, His117, and His123 each coordinate Zn(2+).

Belongs to the endoribonuclease YbeY family. It depends on Zn(2+) as a cofactor.

It is found in the cytoplasm. In terms of biological role, single strand-specific metallo-endoribonuclease involved in late-stage 70S ribosome quality control and in maturation of the 3' terminus of the 16S rRNA. The polypeptide is Endoribonuclease YbeY (Verminephrobacter eiseniae (strain EF01-2)).